The sequence spans 379 residues: Transcription termination factor Rho (379 aa).

One can recognise a Rho RNA-BD domain in the interval 1–68 (MTDKYGFLRS…KRIFQINGRF (68 aa)). Residues 111-116 (GKGQRG), 123-128 (KTGKTT), and Arg154 each bind ATP.

It belongs to the Rho family. In terms of assembly, homohexamer. The homohexamer assembles into an open ring structure.

Functionally, facilitates transcription termination by a mechanism that involves Rho binding to the nascent RNA, activation of Rho's RNA-dependent ATPase activity, and release of the mRNA from the DNA template. This Karelsulcia muelleri (strain SMDSEM) (Sulcia muelleri) protein is Transcription termination factor Rho.